A 352-amino-acid polypeptide reads, in one-letter code: Uroporphyrinogen decarboxylase (352 aa).

Residues 27 to 31 (RQAGR), aspartate 77, tyrosine 154, threonine 209, and histidine 325 contribute to the substrate site.

This sequence belongs to the uroporphyrinogen decarboxylase family. Homodimer.

The protein resides in the cytoplasm. The enzyme catalyses uroporphyrinogen III + 4 H(+) = coproporphyrinogen III + 4 CO2. Its pathway is porphyrin-containing compound metabolism; protoporphyrin-IX biosynthesis; coproporphyrinogen-III from 5-aminolevulinate: step 4/4. Functionally, catalyzes the decarboxylation of four acetate groups of uroporphyrinogen-III to yield coproporphyrinogen-III. The sequence is that of Uroporphyrinogen decarboxylase from Legionella pneumophila (strain Paris).